Reading from the N-terminus, the 403-residue chain is GPI-N-acetylgalactosamine transferase PGAP4 (403 aa).

Residues 1-22 (MSTSTSPAAMLLRRLRRLSWGS) lie on the Cytoplasmic side of the membrane. A helical membrane pass occupies residues 23 to 43 (TAVQLFILTVVTFGLLAPLAC). Over 44-259 (HRLLHSYFYL…RLQHYINPEP (216 aa)) the chain is Lumenal. Residue Asn87 is glycosylated (N-linked (GalNAc...) asparagine). Residue Val109 participates in UDP-N-acetyl-alpha-D-galactosamine binding. 2 cysteine pairs are disulfide-bonded: Cys132–Cys136 and Cys144–Cys194. Positions 211–213 (EDD) match the DXD motif motif. A helical membrane pass occupies residues 260 to 280 (MRILEWVGVGMLLGPLLTWIY). At 281–287 (MRFASRP) the chain is on the cytoplasmic side. A helical transmembrane segment spans residues 288-308 (GFSWPVMLFFSLYSMGLVELV). Residues 309–403 (GRHYFLELRR…LRYNFHPSLL (95 aa)) are Lumenal-facing. Cys332 and Cys333 form a disulfide bridge. Residues Thr334, Pro335, and Lys362 each coordinate UDP-N-acetyl-alpha-D-galactosamine.

It belongs to the PGAP4 family. In terms of processing, glycosylated.

Its subcellular location is the golgi apparatus membrane. Golgi-resident glycosylphosphatidylinositol (GPI)-N-acetylgalactosamine transferase that catalyzes the N-acetyl-beta-D-galactosamine transfer from an UDP-N-acetyl-alpha-D-galactosamine to the 4-OH-position of the first mannose of the glycosylphosphatidylinositol (GPI) of a GPI-anchored protein (GPI-AP). This modification occurs after the fatty acid remodeling step of the GPI-anchor maturation. The protein is GPI-N-acetylgalactosamine transferase PGAP4 of Homo sapiens (Human).